Reading from the N-terminus, the 35-residue chain is MSDIN-like toxin proprotein 1 (35 aa).

Residues 1–10 (MSDINATRLP) constitute a propeptide that is removed on maturation. A cross-link (cyclopeptide (Ile-Pro)) is located at residues 11-20 (IIIVLGLIIP). The propeptide occupies 21–35 (LCVSDIEMILTRGER).

It belongs to the MSDIN fungal toxin family. Processed by the macrocyclase-peptidase enzyme POPB to yield a toxic cyclic decapeptide. POPB first removes 10 residues from the N-terminus. Conformational trapping of the remaining peptide forces the enzyme to release this intermediate rather than proceed to macrocyclization. The enzyme rebinds the remaining peptide in a different conformation and catalyzes macrocyclization of the N-terminal 10 residues.

In terms of biological role, probable toxin that belongs to the MSDIN-like toxin family responsible for a large number of food poisoning cases and deaths. This is MSDIN-like toxin proprotein 1 from Amanita rimosa.